The chain runs to 110 residues: Nucleoid-associated protein NFA_2940 (110 aa).

Belongs to the YbaB/EbfC family. As to quaternary structure, homodimer.

It localises to the cytoplasm. Its subcellular location is the nucleoid. Functionally, binds to DNA and alters its conformation. May be involved in regulation of gene expression, nucleoid organization and DNA protection. This Nocardia farcinica (strain IFM 10152) protein is Nucleoid-associated protein NFA_2940.